Consider the following 160-residue polypeptide: Large ribosomal subunit protein eL21 (160 aa).

Composition is skewed to basic and acidic residues over residues 112 to 123 and 136 to 146; these read NDQKKKEAKEKG and REAHFVRTNGK. The interval 112–146 is disordered; it reads NDQKKKEAKEKGTWVQLNGQPAPPREAHFVRTNGK.

Belongs to the eukaryotic ribosomal protein eL21 family. In terms of assembly, component of the large ribosomal subunit.

The protein resides in the cytoplasm. It is found in the cytosol. The protein localises to the endoplasmic reticulum. Functionally, component of the large ribosomal subunit. The ribosome is a large ribonucleoprotein complex responsible for the synthesis of proteins in the cell. This Rattus norvegicus (Rat) protein is Large ribosomal subunit protein eL21 (Rpl21).